A 490-amino-acid chain; its full sequence is Cis-aconitate decarboxylase (490 aa).

Belongs to the PrpD family. In terms of assembly, homodimer.

The protein localises to the mitochondrion. The enzyme catalyses cis-aconitate + H(+) = itaconate + CO2. Its function is as follows. Involved in the production of itaconic acid, a soluble unsaturated dicarboxylic acid mainly produced from sugars. The polypeptide is Cis-aconitate decarboxylase (cad1) (Aspergillus terreus (strain NIH 2624 / FGSC A1156)).